Consider the following 232-residue polypeptide: 2,3,4,5-tetrahydropyridine-2,6-dicarboxylate N-acetyltransferase (232 aa).

It belongs to the transferase hexapeptide repeat family. DapH subfamily.

It catalyses the reaction (S)-2,3,4,5-tetrahydrodipicolinate + acetyl-CoA + H2O = L-2-acetamido-6-oxoheptanedioate + CoA. The protein operates within amino-acid biosynthesis; L-lysine biosynthesis via DAP pathway; LL-2,6-diaminopimelate from (S)-tetrahydrodipicolinate (acetylase route): step 1/3. Catalyzes the transfer of an acetyl group from acetyl-CoA to tetrahydrodipicolinate. The polypeptide is 2,3,4,5-tetrahydropyridine-2,6-dicarboxylate N-acetyltransferase (Streptococcus pneumoniae (strain Taiwan19F-14)).